The following is a 91-amino-acid chain: Probable Fe(2+)-trafficking protein (91 aa).

This sequence belongs to the Fe(2+)-trafficking protein family.

Its function is as follows. Could be a mediator in iron transactions between iron acquisition and iron-requiring processes, such as synthesis and/or repair of Fe-S clusters in biosynthetic enzymes. The chain is Probable Fe(2+)-trafficking protein from Actinobacillus pleuropneumoniae serotype 5b (strain L20).